A 460-amino-acid polypeptide reads, in one-letter code: Ribosomal protein uS12 methylthiotransferase RimO (460 aa).

An MTTase N-terminal domain is found at 17–128 (PAVAVLHLGC…IVQVIQRAER (112 aa)). Cys-26, Cys-62, Cys-91, Cys-166, Cys-170, and Cys-173 together coordinate [4Fe-4S] cluster. The Radical SAM core domain maps to 152 to 381 (TTHAPVAYLR…MQLQQGIAFR (230 aa)). In terms of domain architecture, TRAM spans 384-450 (REQVGQVVPV…PYDLFGQVVE (67 aa)).

This sequence belongs to the methylthiotransferase family. RimO subfamily. It depends on [4Fe-4S] cluster as a cofactor.

Its subcellular location is the cytoplasm. The enzyme catalyses L-aspartate(89)-[ribosomal protein uS12]-hydrogen + (sulfur carrier)-SH + AH2 + 2 S-adenosyl-L-methionine = 3-methylsulfanyl-L-aspartate(89)-[ribosomal protein uS12]-hydrogen + (sulfur carrier)-H + 5'-deoxyadenosine + L-methionine + A + S-adenosyl-L-homocysteine + 2 H(+). Catalyzes the methylthiolation of an aspartic acid residue of ribosomal protein uS12. The polypeptide is Ribosomal protein uS12 methylthiotransferase RimO (Synechococcus sp. (strain JA-3-3Ab) (Cyanobacteria bacterium Yellowstone A-Prime)).